Here is a 98-residue protein sequence, read N- to C-terminus: Integration host factor subunit alpha (98 aa).

Residues 50-71 (GNFDLRDKNQRPGRNPKTGEDI) are disordered.

This sequence belongs to the bacterial histone-like protein family. Heterodimer of an alpha and a beta chain.

This protein is one of the two subunits of integration host factor, a specific DNA-binding protein that functions in genetic recombination as well as in transcriptional and translational control. In Proteus mirabilis (strain HI4320), this protein is Integration host factor subunit alpha.